The primary structure comprises 502 residues: Neuronal acetylcholine receptor subunit alpha-7 (502 aa).

A signal peptide spans 1–22 (MRCSPGGVWLALAASLLHVSLQ). The Extracellular portion of the chain corresponds to 23 to 233 (GEFQRKLYKE…VTMRRRTLYY (211 aa)). Residues arginine 42 and valine 44 each contribute to the Ca(2+) site. Residues asparagine 46, asparagine 90, and asparagine 133 are each glycosylated (N-linked (GlcNAc...) asparagine). Cysteine 150 and cysteine 164 are joined by a disulfide. The Ca(2+) site is built by serine 172 and tyrosine 210. The cysteines at positions 212 and 213 are disulfide-linked. Helical transmembrane passes span 234-254 (GLNLLIPCVLISALALLVFLL), 259-279 (GEKISLGITVLLSLTVFMLLV), and 292-315 (LIAQYFASTMIIVGLSVVVTVIVL). Positions 260-267 (EKISLGIT) are essential for TMEM35A/NACHO-mediated proper subunit assembly and trafficking to cell membrane. Topologically, residues 316 to 466 (QYHHHDPDGG…CSEWKFAACV (151 aa)) are cytoplasmic. A helical transmembrane segment spans residues 467 to 489 (VDRLCLMAFSVFTIICTIGILMS).

It belongs to the ligand-gated ion channel (TC 1.A.9) family. Acetylcholine receptor (TC 1.A.9.1) subfamily. Alpha-7/CHRNA7 sub-subfamily. Homopentamer. Can also form heteropentamers with CHRNB2, mainly found in basal forebrain cholinergic neurons. Interacts with RIC3; which is required for proper folding and assembly. Interacts with LYPD6. Interacts with CANX. In terms of processing, glycosylations at Asn-46, Asn-90 and Asn-133 are essential for TMEM35A/NACHO-mediated proper subunit assembly and trafficking to the cell membrane. Expressed in neuronal cells. Expressed in macrophages (at protein level).

The protein resides in the postsynaptic cell membrane. It localises to the cell membrane. It carries out the reaction Ca(2+)(in) = Ca(2+)(out). The enzyme catalyses K(+)(in) = K(+)(out). The catalysed reaction is Na(+)(in) = Na(+)(out). It catalyses the reaction choline(out) = choline(in). It carries out the reaction NH4(+)(in) = NH4(+)(out). The enzyme catalyses L-arginine(in) = L-arginine(out). The catalysed reaction is guanidine(out) = guanidine(in). Activated by a myriad of ligands such as acetylcholine, cytisine, nicotine, choline and epibatidine. Oligomeric amyloid-beta protein 42 activates specifially CHRNA7:CHRNB2 nAchRs. Activity is modulated by positive allosteric modulators (PAMs), such as flavonoids, with a wide range of chemical diversity, pharmacological sensitivity and efficacy. AChR activity is inhibited by the antagonists alpha-conotoxons RgIA, ImI and ImII, small disulfide-constrained peptides from cone snails. Alpha-conotoxin PnIC selectively inhibits CHRNA7:CHRNB2 over CHRNA7 homopentamer. Functionally, component of neuronal acetylcholine receptors (nAChRs) that function as pentameric, ligand-gated cation channels with high calcium permeability among other activities. nAChRs are excitatory neurotrasnmitter receptors formed by a collection of nAChR subunits known to mediate synaptic transmission in the nervous system and the neuromuscular junction. Each nAchR subunit confers differential attributes to channel properties, including activation, deactivation and desensitization kinetics, pH sensitivity, cation permeability, and binding to allosteric modulators. CHRNA7 forms homopentameric neuronal acetylcholine receptors abundantly expressed in the central nervous system, characterized by fast desensitization and high calcium permeability. Also forms heteropentamers with CHRNB2, mainly expressed in basal forebrain cholinergic neurons. Involved in the modulation of calcium-dependent signaling pathways and influences the release of neurotransmitters, including dopamine, glutamate and GABA. Also expressed in non-neuronal cells such as immune cells like lymphocytes, monocytes and macrophages. In T cells, activation induces metabotropic signaling that results in an increase of intracellular Ca2+ concentrations, independent of ionotropic receptor functions. In macrophages, required for acetylcholine-mediated inhibition of TNF and other inflammatory cytokine release. Once activated by acetylcholine, nicotine or other agonists, selectively inhibits production of pro-inflammatory cytokines while leaving anti-inflammatory cytokines undisturbed. Stimulates the cholinergic anti-inflammatory pathway, controlling inflammation by inhibiting NFKB nuclear translocation and activating the JAK2-STAT3 pathway, independently of ion channel activity. Also expressed in the urothelium where it modulates reflex bladder activity by increasing intracellular calcium through internal stores and decreasing basal ATP release. This Homo sapiens (Human) protein is Neuronal acetylcholine receptor subunit alpha-7.